The sequence spans 438 residues: V-type ATP synthase beta chain (438 aa).

The protein belongs to the ATPase alpha/beta chains family.

Its function is as follows. Produces ATP from ADP in the presence of a proton gradient across the membrane. The V-type beta chain is a regulatory subunit. In Protochlamydia amoebophila (strain UWE25), this protein is V-type ATP synthase beta chain.